We begin with the raw amino-acid sequence, 652 residues long: WD repeat-containing protein 70 (652 aa).

Disordered stretches follow at residues 1–22 (MERP…LAVT) and 45–171 (RRTA…IPDS). Residues 45–76 (RRTAVERSRKTLEAREREEEMNREKELRRQNE) are compositionally biased toward basic and acidic residues. Low complexity predominate over residues 92–102 (SKSSSRDTSSS). 2 stretches are compositionally biased toward acidic residues: residues 103–115 (ESDE…DDEL) and 146–162 (EDVE…EEEE). WD repeat units follow at residues 178 to 217 (HGTK…ASFK), 225 to 266 (CECH…ECIK), 279 to 319 (GHTA…KQKS), 328 to 367 (GKKV…HPKF), 374 to 413 (DPGT…KPLF), 419 to 464 (PTMF…RVYE), and 467 to 506 (ITDA…QRGA). A Glycyl lysine isopeptide (Lys-Gly) (interchain with G-Cter in SUMO2) cross-link involves residue Lys294. Residue Lys450 is modified to N6-acetyllysine. Over residues 538 to 563 (REPRQRSTRKQLEKDRLDPLKSHKPE) the composition is skewed to basic and acidic residues. Residues 538 to 577 (REPRQRSTRKQLEKDRLDPLKSHKPEPPVAGPGRGGRVGT) form a disordered region. Thr577 carries the phosphothreonine modification. Glycyl lysine isopeptide (Lys-Gly) (interchain with G-Cter in SUMO2) cross-links involve residues Lys588 and Lys594. 2 positions are modified to phosphoserine: Ser619 and Ser636. The tract at residues 629 to 652 (TMFAQVESDDEETKNEPEWKKRKI) is disordered. The span at 642-652 (KNEPEWKKRKI) shows a compositional bias: basic and acidic residues.

The protein belongs to the WD repeat GAD-1 family.

This is WD repeat-containing protein 70 (WDR70) from Bos taurus (Bovine).